Consider the following 124-residue polypeptide: MAKPYGVVIISHSKDVAKGVHDIIKEIAPDVSITHAGGTEDGRIGTSFDTVNEAIESNEADKVYTFYDLGSAKMNIETVEEISEKEIILFNAPILEGAYATAAQIQMDEKPEVIAANLKTIEIK.

The PTS EIIA type-4 domain maps to Pro-4–Lys-124. Residue His-12 is the Tele-phosphohistidine intermediate of the active site.

The protein belongs to the PEP-utilizing enzyme family. Homodimer. The dihydroxyacetone kinase complex is composed of a homodimer of DhaM, a homodimer of DhaK and the subunit DhaL.

The protein resides in the cytoplasm. It catalyses the reaction dihydroxyacetone + phosphoenolpyruvate = dihydroxyacetone phosphate + pyruvate. In terms of biological role, component of the dihydroxyacetone kinase complex, which is responsible for the phosphoenolpyruvate (PEP)-dependent phosphorylation of dihydroxyacetone. DhaM serves as the phosphoryl donor. Is phosphorylated by phosphoenolpyruvate in an EI- and HPr-dependent reaction, and a phosphorelay system on histidine residues finally leads to phosphoryl transfer to DhaL and dihydroxyacetone. The chain is PEP-dependent dihydroxyacetone kinase 1, phosphoryl donor subunit DhaM from Listeria innocua serovar 6a (strain ATCC BAA-680 / CLIP 11262).